Reading from the N-terminus, the 359-residue chain is Protein FAM50 homolog (359 aa).

2 disordered regions span residues Asn-122–Pro-150 and Pro-339–Lys-359. Over residues Leu-123–Asp-136 the composition is skewed to acidic residues. Residues His-137 to Pro-150 are compositionally biased toward basic and acidic residues.

Belongs to the FAM50 family.

The polypeptide is Protein FAM50 homolog (Drosophila melanogaster (Fruit fly)).